The sequence spans 333 residues: Tetraacyldisaccharide 4'-kinase (333 aa).

Threonine 60–threonine 67 is an ATP binding site.

The protein belongs to the LpxK family.

It carries out the reaction a lipid A disaccharide + ATP = a lipid IVA + ADP + H(+). Its pathway is glycolipid biosynthesis; lipid IV(A) biosynthesis; lipid IV(A) from (3R)-3-hydroxytetradecanoyl-[acyl-carrier-protein] and UDP-N-acetyl-alpha-D-glucosamine: step 6/6. Transfers the gamma-phosphate of ATP to the 4'-position of a tetraacyldisaccharide 1-phosphate intermediate (termed DS-1-P) to form tetraacyldisaccharide 1,4'-bis-phosphate (lipid IVA). The protein is Tetraacyldisaccharide 4'-kinase of Azotobacter vinelandii (strain DJ / ATCC BAA-1303).